Reading from the N-terminus, the 229-residue chain is 2-C-methyl-D-erythritol 4-phosphate cytidylyltransferase (229 aa).

The protein belongs to the IspD/TarI cytidylyltransferase family. IspD subfamily.

The enzyme catalyses 2-C-methyl-D-erythritol 4-phosphate + CTP + H(+) = 4-CDP-2-C-methyl-D-erythritol + diphosphate. It participates in isoprenoid biosynthesis; isopentenyl diphosphate biosynthesis via DXP pathway; isopentenyl diphosphate from 1-deoxy-D-xylulose 5-phosphate: step 2/6. In terms of biological role, catalyzes the formation of 4-diphosphocytidyl-2-C-methyl-D-erythritol from CTP and 2-C-methyl-D-erythritol 4-phosphate (MEP). The protein is 2-C-methyl-D-erythritol 4-phosphate cytidylyltransferase of Neisseria meningitidis serogroup B (strain ATCC BAA-335 / MC58).